The following is a 334-amino-acid chain: D-aspartate oxidase 2 (334 aa).

FAD-binding residues include D38, K39, S46, G310, and T315.

Belongs to the DAMOX/DASOX family. FAD is required as a cofactor. Expressed in the intestinal cells, pharyngeal muscles, and body wall muscles in adult hermaphrodites.

It localises to the cytoplasm. It carries out the reaction D-aspartate + O2 + H2O = oxaloacetate + H2O2 + NH4(+). The catalysed reaction is D-glutamate + O2 + H2O = H2O2 + 2-oxoglutarate + NH4(+). With respect to regulation, inhibited by thiolactomycin. Selectively catalyzes the oxidative deamination of acidic amino acids. May play a role in the egg-laying events and early development of the worm, in addition to quality control of the germ cells. This is D-aspartate oxidase 2 (ddo-2) from Caenorhabditis elegans.